Consider the following 510-residue polypeptide: Lysine--tRNA ligase (510 aa).

Mg(2+) is bound by residues Glu-420 and Glu-427.

Belongs to the class-II aminoacyl-tRNA synthetase family. As to quaternary structure, homodimer. The cofactor is Mg(2+).

The protein resides in the cytoplasm. It carries out the reaction tRNA(Lys) + L-lysine + ATP = L-lysyl-tRNA(Lys) + AMP + diphosphate. The protein is Lysine--tRNA ligase (lysS) of Vibrio cholerae serotype O1 (strain ATCC 39315 / El Tor Inaba N16961).